The primary structure comprises 191 residues: Fe/S biogenesis protein NfuA (191 aa).

2 residues coordinate [4Fe-4S] cluster: cysteine 149 and cysteine 152.

This sequence belongs to the NfuA family. As to quaternary structure, homodimer. It depends on [4Fe-4S] cluster as a cofactor.

Functionally, involved in iron-sulfur cluster biogenesis. Binds a 4Fe-4S cluster, can transfer this cluster to apoproteins, and thereby intervenes in the maturation of Fe/S proteins. Could also act as a scaffold/chaperone for damaged Fe/S proteins. The chain is Fe/S biogenesis protein NfuA from Salmonella paratyphi A (strain ATCC 9150 / SARB42).